Reading from the N-terminus, the 336-residue chain is O-methyltransferase 2 (336 aa).

Residues G170, D198, N221, F222, and K237 each contribute to the S-adenosyl-L-methionine site. H241 acts as the Proton acceptor in catalysis.

It belongs to the class I-like SAM-binding methyltransferase superfamily. Cation-independent O-methyltransferase family. COMT subfamily.

The catalysed reaction is (3,5-dichloro-2,4,6-trihydroxyphenyl)hexan-1-one + S-adenosyl-L-methionine = 1-(3,5-dichloro-2,6-dihydroxy-4-methoxyphenyl)hexan-1-one + S-adenosyl-L-homocysteine + H(+). The chain is O-methyltransferase 2 (omt2) from Dictyostelium discoideum (Social amoeba).